A 306-amino-acid chain; its full sequence is Elongation factor Ts (306 aa).

Positions 80–83 are involved in Mg(2+) ion dislocation from EF-Tu; it reads TDFV.

This sequence belongs to the EF-Ts family.

Its subcellular location is the cytoplasm. Associates with the EF-Tu.GDP complex and induces the exchange of GDP to GTP. It remains bound to the aminoacyl-tRNA.EF-Tu.GTP complex up to the GTP hydrolysis stage on the ribosome. The sequence is that of Elongation factor Ts from Clostridium kluyveri (strain NBRC 12016).